We begin with the raw amino-acid sequence, 160 residues long: 6,7-dimethyl-8-ribityllumazine synthase (160 aa).

Residues phenylalanine 22, 57–59 (AVE), and 81–83 (AVI) each bind 5-amino-6-(D-ribitylamino)uracil. (2S)-2-hydroxy-3-oxobutyl phosphate is bound at residue 86–87 (GT). Histidine 89 serves as the catalytic Proton donor. Phenylalanine 114 provides a ligand contact to 5-amino-6-(D-ribitylamino)uracil. Arginine 128 contacts (2S)-2-hydroxy-3-oxobutyl phosphate.

The protein belongs to the DMRL synthase family. Forms an icosahedral capsid composed of 60 subunits, arranged as a dodecamer of pentamers.

The catalysed reaction is (2S)-2-hydroxy-3-oxobutyl phosphate + 5-amino-6-(D-ribitylamino)uracil = 6,7-dimethyl-8-(1-D-ribityl)lumazine + phosphate + 2 H2O + H(+). Its pathway is cofactor biosynthesis; riboflavin biosynthesis; riboflavin from 2-hydroxy-3-oxobutyl phosphate and 5-amino-6-(D-ribitylamino)uracil: step 1/2. In terms of biological role, catalyzes the formation of 6,7-dimethyl-8-ribityllumazine by condensation of 5-amino-6-(D-ribitylamino)uracil with 3,4-dihydroxy-2-butanone 4-phosphate. This is the penultimate step in the biosynthesis of riboflavin. This chain is 6,7-dimethyl-8-ribityllumazine synthase, found in Shewanella sediminis (strain HAW-EB3).